Reading from the N-terminus, the 97-residue chain is UPF0235 protein APP7_1431 (97 aa).

It belongs to the UPF0235 family.

This is UPF0235 protein APP7_1431 from Actinobacillus pleuropneumoniae serotype 7 (strain AP76).